Here is a 536-residue protein sequence, read N- to C-terminus: Allene oxide synthase, chloroplastic (536 aa).

The transit peptide at 1–58 (MASSALNNLVAVNPNTLSPSPKSTPLPNTFSNLRRVSAFRPIKASLFGDSPIKIPGIT) directs the protein to the chloroplast. Heme b contacts are provided by Lys-151, His-182, and Lys-186. (13S)-hydroperoxy-(9Z,11E)-octadecadienoate is bound by residues Ser-262, Asn-339, and Lys-345. Residue Asn-339 participates in (13S)-hydroperoxy-(9Z,11E,15Z)-octadecatrienoate binding. Lys-487 and Cys-489 together coordinate heme b.

It belongs to the cytochrome P450 family. The cofactor is heme b.

It localises to the plastid. Its subcellular location is the chloroplast. It carries out the reaction (13S)-hydroperoxy-(9Z,11E,15Z)-octadecatrienoate = (9Z,13S,15Z)-12,13-epoxyoctadeca-9,11,15-trienoate + H2O. It catalyses the reaction (13S)-hydroperoxy-(9Z,11E)-octadecadienoate = (9Z,13S)-12,13-epoxyoctadeca-9,11-dienoate + H2O. The protein operates within lipid metabolism; oxylipin biosynthesis. Cytochrome P450 enzyme involved in the biosynthesis of oxylipin jasmonates, important phytohormones acting as growth regulators and signaling molecules for plant defense. Functions as an allene oxide synthase that converts hydroperoxy fatty acids to unstable allene epoxides. Catalyzes the dehydration of 13-HPOTE ((13S)-hydroperoxy-(9Z,11E,15Z)-octadecatrienoate), as well as 13-HPODE ((13S)-hydroperoxy-(9Z,11E)-octadecadienoate). The chain is Allene oxide synthase, chloroplastic (CYP74A) from Linum usitatissimum (Flax).